The chain runs to 354 residues: Probable L-ascorbate-6-phosphate lactonase UlaG (354 aa).

The protein belongs to the UlaG family. A divalent metal cation is required as a cofactor.

The protein resides in the cytoplasm. It carries out the reaction L-ascorbate 6-phosphate + H2O = 3-dehydro-L-gulonate 6-phosphate. It participates in cofactor degradation; L-ascorbate degradation; D-xylulose 5-phosphate from L-ascorbate: step 1/4. Functionally, probably catalyzes the hydrolysis of L-ascorbate-6-P into 3-keto-L-gulonate-6-P. Is essential for L-ascorbate utilization under anaerobic conditions. The protein is Probable L-ascorbate-6-phosphate lactonase UlaG of Shigella dysenteriae serotype 1 (strain Sd197).